Reading from the N-terminus, the 152-residue chain is D-aminoacyl-tRNA deacylase (152 aa).

The Gly-cisPro motif, important for rejection of L-amino acids motif lies at 142–143 (GP).

The protein belongs to the DTD family. As to quaternary structure, homodimer.

Its subcellular location is the cytoplasm. The catalysed reaction is glycyl-tRNA(Ala) + H2O = tRNA(Ala) + glycine + H(+). It carries out the reaction a D-aminoacyl-tRNA + H2O = a tRNA + a D-alpha-amino acid + H(+). An aminoacyl-tRNA editing enzyme that deacylates mischarged D-aminoacyl-tRNAs. Also deacylates mischarged glycyl-tRNA(Ala), protecting cells against glycine mischarging by AlaRS. Acts via tRNA-based rather than protein-based catalysis; rejects L-amino acids rather than detecting D-amino acids in the active site. By recycling D-aminoacyl-tRNA to D-amino acids and free tRNA molecules, this enzyme counteracts the toxicity associated with the formation of D-aminoacyl-tRNA entities in vivo and helps enforce protein L-homochirality. The chain is D-aminoacyl-tRNA deacylase from Burkholderia lata (strain ATCC 17760 / DSM 23089 / LMG 22485 / NCIMB 9086 / R18194 / 383).